The primary structure comprises 215 residues: Adenylate kinase (215 aa).

10-15 contributes to the ATP binding site; the sequence is GAGKGT. Residues 30-59 are NMP; that stretch reads STGDMLRAAVKAGTELGLKAKSVMDSGGLV. Residues Thr31, Arg36, 57–59, 85–88, and Gln92 each bind AMP; these read GLV and GFPR. The segment at 122–159 is LID; that stretch reads GRRVHEASGRVYHTVYNPPKIAGKDDITGEDLVQRKDD. ATP is bound by residues Arg123 and 132-133; that span reads VY. Arg156 and Arg167 together coordinate AMP. Gly201 is a binding site for ATP.

It belongs to the adenylate kinase family. In terms of assembly, monomer.

It is found in the cytoplasm. It catalyses the reaction AMP + ATP = 2 ADP. It functions in the pathway purine metabolism; AMP biosynthesis via salvage pathway; AMP from ADP: step 1/1. Its function is as follows. Catalyzes the reversible transfer of the terminal phosphate group between ATP and AMP. Plays an important role in cellular energy homeostasis and in adenine nucleotide metabolism. This Pseudomonas fluorescens (strain ATCC BAA-477 / NRRL B-23932 / Pf-5) protein is Adenylate kinase.